We begin with the raw amino-acid sequence, 888 residues long: Valine--tRNA ligase (888 aa).

The 'HIGH' region motif lies at 43 to 53 (PFTSGTLHLGH). A 'KMSKS' region motif is present at residues 534–538 (KMSKS). Lys537 provides a ligand contact to ATP.

It belongs to the class-I aminoacyl-tRNA synthetase family. ValS type 2 subfamily.

It localises to the cytoplasm. It catalyses the reaction tRNA(Val) + L-valine + ATP = L-valyl-tRNA(Val) + AMP + diphosphate. In terms of biological role, catalyzes the attachment of valine to tRNA(Val). As ValRS can inadvertently accommodate and process structurally similar amino acids such as threonine, to avoid such errors, it has a 'posttransfer' editing activity that hydrolyzes mischarged Thr-tRNA(Val) in a tRNA-dependent manner. The polypeptide is Valine--tRNA ligase (Thermococcus kodakarensis (strain ATCC BAA-918 / JCM 12380 / KOD1) (Pyrococcus kodakaraensis (strain KOD1))).